The chain runs to 408 residues: Putative agmatinase 3 (408 aa).

The signal sequence occupies residues 1-21; the sequence is MKSVEWFTWGVFLLLSGFGEA. Mn(2+) is bound by residues histidine 198, aspartate 222, histidine 224, aspartate 226, aspartate 319, and aspartate 321.

This sequence belongs to the arginase family. Requires Mn(2+) as cofactor.

The catalysed reaction is agmatine + H2O = urea + putrescine. The polypeptide is Putative agmatinase 3 (Schizosaccharomyces pombe (strain 972 / ATCC 24843) (Fission yeast)).